Reading from the N-terminus, the 74-residue chain is ATP synthase subunit 9, mitochondrial (74 aa).

Helical transmembrane passes span 16-36 and 50-70; these read GLIGAGVGIGVVFGALILGVA and ILGFAFSEATGLFALMMAFLL.

It belongs to the ATPase C chain family. As to quaternary structure, F-type ATPases have 2 components, CF(1) - the catalytic core - and CF(0) - the membrane proton channel. CF(1) has five subunits: alpha(3), beta(3), gamma(1), delta(1), epsilon(1). CF(0) has three main subunits: a, b and c.

Its subcellular location is the mitochondrion membrane. Functionally, mitochondrial membrane ATP synthase (F(1)F(0) ATP synthase or Complex V) produces ATP from ADP in the presence of a proton gradient across the membrane which is generated by electron transport complexes of the respiratory chain. F-type ATPases consist of two structural domains, F(1) - containing the extramembraneous catalytic core and F(0) - containing the membrane proton channel, linked together by a central stalk and a peripheral stalk. During catalysis, ATP synthesis in the catalytic domain of F(1) is coupled via a rotary mechanism of the central stalk subunits to proton translocation. Part of the complex F(0) domain. A homomeric c-ring of probably 10 subunits is part of the complex rotary element. In Trichophyton rubrum (Athlete's foot fungus), this protein is ATP synthase subunit 9, mitochondrial (ATP9).